Consider the following 1678-residue polypeptide: Serine/threonine-protein kinase pakD (1678 aa).

Residues 1–15 (MSRLQPQQQQRGRSS) are compositionally biased toward low complexity. Disordered regions lie at residues 1–73 (MSRL…NNKF), 180–224 (NSNS…PNKN), 262–428 (QLSS…NNNN), and 442–489 (KRKS…SQSS). The segment covering 17-34 (FKDNFQIQKPLQSLTPSE) has biased composition (polar residues). Composition is skewed to low complexity over residues 35 to 73 (QQQQ…NNKF) and 180 to 214 (NSNS…NNNN). One can recognise a Calponin-homology (CH) domain in the interval 82–189 (KNVENDIKKW…NSNSSKTTTN (108 aa)). The span at 215-224 (RAIITSPNKN) shows a compositional bias: polar residues. Low complexity-rich tracts occupy residues 276-359 (NNNN…NINN) and 399-428 (NNNN…NNNN). Acidic residues predominate over residues 460 to 472 (DSSDSSDSSDSDS). Coiled coils occupy residues 512–542 (KQDK…KKLL) and 570–628 (TRQI…YANT). 3 stretches are compositionally biased toward low complexity: residues 631–654 (SSNS…INGS), 662–671 (NSSTSKGTLS), and 695–713 (NSHQ…QTTS). Disordered regions lie at residues 631–672 (SSNS…TLSR) and 693–722 (PVNS…ASYN). Residues 752-862 (VSATLQQKQQ…QNQQINNLID (111 aa)) are a coiled coil. The Phorbol-ester/DAG-type zinc finger occupies 1141-1197 (PHSFVLKSFRIISECNYCRQYIWGVRGIVAREAFECVGCKYKTHKKCLKEASEKTFC). In terms of domain architecture, CRIB spans 1202–1215 (VGAPFNVKHEMHVG). Disordered stretches follow at residues 1267–1292 (LTNN…QQNQ) and 1323–1346 (NNTY…PNNN). The stretch at 1269 to 1309 (NNSNNNNNNNNSNNNLQQQQQQNQQLKQKLNITNNQQNNTI) forms a coiled coil. Positions 1376–1647 (YKVREVVGGG…AHYLLRHPFL (272 aa)) constitute a Protein kinase domain. Residues 1382-1390 (VGGGSTGKV) and Lys-1405 contribute to the ATP site. The Proton acceptor role is filled by Asp-1515.

The protein belongs to the protein kinase superfamily. STE Ser/Thr protein kinase family. STE20 subfamily. Mg(2+) serves as cofactor.

The enzyme catalyses L-seryl-[protein] + ATP = O-phospho-L-seryl-[protein] + ADP + H(+). It catalyses the reaction L-threonyl-[protein] + ATP = O-phospho-L-threonyl-[protein] + ADP + H(+). This is Serine/threonine-protein kinase pakD from Dictyostelium discoideum (Social amoeba).